Consider the following 282-residue polypeptide: Fibrinogen-like protein A (282 aa).

The first 24 residues, 1–24 (MFSFIMKAAILLILVGCISFCISS), serve as a signal peptide directing secretion. Residues 61–281 (SHSPEYPRDC…FAEMKLRNRS (221 aa)) enclose the Fibrinogen C-terminal domain. Disulfide bonds link C70-C101 and C224-C240.

In Apostichopus parvimensis (Warty sea cucumber), this protein is Fibrinogen-like protein A.